Here is a 143-residue protein sequence, read N- to C-terminus: Transcriptional regulator MraZ (143 aa).

2 SpoVT-AbrB domains span residues 5-47 (TYAP…SQRE) and 76-119 (ASAE…DAEA).

The protein belongs to the MraZ family. In terms of assembly, forms oligomers.

The protein localises to the cytoplasm. Its subcellular location is the nucleoid. This chain is Transcriptional regulator MraZ, found in Leifsonia xyli subsp. xyli (strain CTCB07).